The following is a 288-amino-acid chain: Ras-like protein 1 (288 aa).

Residue 11 to 18 (GGGGVGKS) coordinates GTP. The Effector region motif lies at 33-41 (YDPTIEDSY). Residues 58-62 (DTAGQ) and 117-120 (NKCD) each bind GTP. The interval 176–288 (EKQQQQQQQQ…KSKNGCCVIV (113 aa)) is disordered. Low complexity-rich tracts occupy residues 178–216 (QQQQ…NNNN) and 246–281 (PNQS…SKSK). Cys-284 is lipidated: S-palmitoyl cysteine. Cys-285 is subject to Cysteine methyl ester. Cys-285 carries S-farnesyl cysteine lipidation. Residues 286–288 (VIV) constitute a propeptide, removed in mature form.

Belongs to the small GTPase superfamily. Ras family.

The protein localises to the cell membrane. It catalyses the reaction GTP + H2O = GDP + phosphate + H(+). Alternates between an inactive form bound to GDP and an active form bound to GTP. Activated by a guanine nucleotide-exchange factor (GEF) and inactivated by a GTPase-activating protein (GAP). Its function is as follows. Required for the regulation of both a MAP kinase signaling pathway and a cAMP signaling pathway. The activation of these pathways contributes to the pathogenicity of the cells through the induction of the morphological transition from the yeast to the polarized filamentous form. This Candida albicans (strain WO-1) (Yeast) protein is Ras-like protein 1 (RAS1).